A 256-amino-acid polypeptide reads, in one-letter code: Pimeloyl-[acyl-carrier protein] methyl ester esterase (256 aa).

Positions 15 to 242 constitute an AB hydrolase-1 domain; sequence HLVLLHGWGL…AAHAPFISHP (228 aa). Residues tryptophan 22, 82–83, and 143–147 each bind substrate; these read SL and FLALQ. Catalysis depends on serine 82, which acts as the Nucleophile. Residues aspartate 207 and histidine 235 contribute to the active site. Residue histidine 235 coordinates substrate.

This sequence belongs to the AB hydrolase superfamily. Carboxylesterase BioH family. Monomer.

It localises to the cytoplasm. It carries out the reaction 6-carboxyhexanoyl-[ACP] methyl ester + H2O = 6-carboxyhexanoyl-[ACP] + methanol + H(+). It functions in the pathway cofactor biosynthesis; biotin biosynthesis. Its function is as follows. The physiological role of BioH is to remove the methyl group introduced by BioC when the pimeloyl moiety is complete. It allows to synthesize pimeloyl-ACP via the fatty acid synthetic pathway through the hydrolysis of the ester bonds of pimeloyl-ACP esters. This chain is Pimeloyl-[acyl-carrier protein] methyl ester esterase, found in Escherichia coli O139:H28 (strain E24377A / ETEC).